The chain runs to 296 residues: tRNA dimethylallyltransferase (296 aa).

2 to 9 (GPTASGKT) is an ATP binding site. 4–9 (TASGKT) contributes to the substrate binding site. 3 interaction with substrate tRNA regions span residues 27-30 (DSAL), 151-155 (QRLSR), and 232-237 (RCVGYR).

Belongs to the IPP transferase family. In terms of assembly, monomer. Mg(2+) serves as cofactor.

The catalysed reaction is adenosine(37) in tRNA + dimethylallyl diphosphate = N(6)-dimethylallyladenosine(37) in tRNA + diphosphate. Catalyzes the transfer of a dimethylallyl group onto the adenine at position 37 in tRNAs that read codons beginning with uridine, leading to the formation of N6-(dimethylallyl)adenosine (i(6)A). The chain is tRNA dimethylallyltransferase from Shewanella sp. (strain MR-7).